Consider the following 73-residue polypeptide: Small ribosomal subunit protein bS18 (73 aa).

This sequence belongs to the bacterial ribosomal protein bS18 family. Part of the 30S ribosomal subunit. Forms a tight heterodimer with protein bS6.

Binds as a heterodimer with protein bS6 to the central domain of the 16S rRNA, where it helps stabilize the platform of the 30S subunit. This is Small ribosomal subunit protein bS18 from Prochlorococcus marinus (strain SARG / CCMP1375 / SS120).